The primary structure comprises 742 residues: 2'-5'-oligoadenylate synthase 2 (742 aa).

The segment at 1–35 (MGNWLTGNWSSDRSSGYSSGWSPGGSSGVPSGPVH) is disordered. Residue Gly-2 is the site of N-myristoyl glycine attachment. Over residues 10 to 21 (SSDRSSGYSSGW) the composition is skewed to low complexity. OAS domain regions lie at residues 60-374 (VPSQ…YWDV) and 382-721 (TPSH…WKVP). The residue at position 417 (Lys-417) is an N6-acetyllysine. An ATP-binding site is contributed by Ser-436. The Mg(2+) site is built by Asp-448, Asp-450, and Asp-519. 2 residues coordinate ATP: Arg-582 and Lys-585.

Belongs to the 2-5A synthase family. Homodimer. The cofactor is Mg(2+). Myristoylation is not essential for its activity. In terms of processing, glycosylated. Glycosylation is essential for its activity. As to expression, expressed in the uterus. Expressed in mammary glands: expressed at low level before the establishment of lactation, then expression strongly increases, and subsequently decreases during early involution.

Its subcellular location is the cytoplasm. The protein resides in the perinuclear region. The enzyme catalyses 3 ATP = 5'-triphosphoadenylyl-(2'-&gt;5')-adenylyl-(2'-&gt;5')-adenosine + 2 diphosphate. Produced as a latent enzyme which is activated by double stranded RNA (dsRNA) generated during the course of viral infection. The dsRNA activator must be at least 15 nucleotides long, and no modification of the 2'-hydroxyl group is tolerated. ssRNA or dsDNA do not act as activators. Strongly inhibited by copper, iron and zinc ions. Partially inhibited by cobalt and nickel ions. Functionally, interferon-induced, dsRNA-activated antiviral enzyme which plays a critical role in cellular innate antiviral response. Activated by detection of double stranded RNA (dsRNA): polymerizes higher oligomers of 2'-5'-oligoadenylates (2-5A) from ATP which then bind to the inactive monomeric form of ribonuclease L (RNASEL) leading to its dimerization and subsequent activation. Activation of RNASEL leads to degradation of cellular as well as viral RNA, resulting in the inhibition of protein synthesis, thus terminating viral replication. Can mediate the antiviral effect via the classical RNASEL-dependent pathway or an alternative antiviral pathway independent of RNASEL. In addition, it may also play a role in other cellular processes such as apoptosis, cell growth, differentiation and gene regulation. May act as a negative regulator of lactation, stopping lactation in virally infected mammary gland lobules, thereby preventing transmission of viruses to neonates. Non-infected lobules would not be affected, allowing efficient pup feeding during infection. The polypeptide is 2'-5'-oligoadenylate synthase 2 (Mus musculus (Mouse)).